A 401-amino-acid chain; its full sequence is Multidrug resistance protein MdtA (401 aa).

The signal sequence occupies residues 1-20; it reads MNQNNKHRTLLFRAALAAIA.

It belongs to the membrane fusion protein (MFP) (TC 8.A.1) family. In terms of assembly, part of a tripartite efflux system composed of MdtA, MdtB and MdtC.

It is found in the cell inner membrane. This Photorhabdus laumondii subsp. laumondii (strain DSM 15139 / CIP 105565 / TT01) (Photorhabdus luminescens subsp. laumondii) protein is Multidrug resistance protein MdtA.